A 207-amino-acid polypeptide reads, in one-letter code: Large ribosomal subunit protein uL4 (207 aa).

A disordered region spans residues 44-77 (LRQGTHKTKGRSEVRGGGRKPWRQKGTGRARQGS). Basic residues predominate over residues 60–71 (GGRKPWRQKGTG).

Belongs to the universal ribosomal protein uL4 family. Part of the 50S ribosomal subunit.

Functionally, one of the primary rRNA binding proteins, this protein initially binds near the 5'-end of the 23S rRNA. It is important during the early stages of 50S assembly. It makes multiple contacts with different domains of the 23S rRNA in the assembled 50S subunit and ribosome. Its function is as follows. Forms part of the polypeptide exit tunnel. In Shouchella clausii (strain KSM-K16) (Alkalihalobacillus clausii), this protein is Large ribosomal subunit protein uL4.